The primary structure comprises 521 residues: Maturase K (521 aa).

The protein belongs to the intron maturase 2 family. MatK subfamily.

It is found in the plastid. Its function is as follows. Usually encoded in the trnK tRNA gene intron. Probably assists in splicing its own and other chloroplast group II introns. This Cuscuta exaltata (Tall dodder) protein is Maturase K.